Reading from the N-terminus, the 370-residue chain is Anhydro-N-acetylmuramic acid kinase (370 aa).

Residue 13–20 coordinates ATP; the sequence is GTSMDGVD.

The protein belongs to the anhydro-N-acetylmuramic acid kinase family.

The enzyme catalyses 1,6-anhydro-N-acetyl-beta-muramate + ATP + H2O = N-acetyl-D-muramate 6-phosphate + ADP + H(+). The protein operates within amino-sugar metabolism; 1,6-anhydro-N-acetylmuramate degradation. It functions in the pathway cell wall biogenesis; peptidoglycan recycling. Functionally, catalyzes the specific phosphorylation of 1,6-anhydro-N-acetylmuramic acid (anhMurNAc) with the simultaneous cleavage of the 1,6-anhydro ring, generating MurNAc-6-P. Is required for the utilization of anhMurNAc either imported from the medium or derived from its own cell wall murein, and thus plays a role in cell wall recycling. This is Anhydro-N-acetylmuramic acid kinase from Shewanella frigidimarina (strain NCIMB 400).